We begin with the raw amino-acid sequence, 243 residues long: MDGFDVSQAPPEYRSVEPIANLFVLGMGLGWLINYVGMIYQSFKDETYGMAIMPLCCNIAWEIVYSLIYPSKSLTEQGVFIAGLTINIGVMYAAIKFAPKEWSHAPLVMRNLSLIFFLATLGFLTGHLALAAEIGHSLAYSWGAVVCQLLLSVGGLCQLLCRGCTRGASYTLWLSRFLGSSCTVGFASLRWMYWPESFSWLNSPLVLWSLALFLTVDGSYGICYWYVRQYELSLKEAEGRKSK.

The next 3 helical transmembrane spans lie at 19-39 (IANL…VGMI), 48-68 (YGMA…YSLI), and 78-98 (GVFI…IKFA). The N-linked (GlcNAc...) asparagine glycan is linked to asparagine 111. The next 4 helical transmembrane spans lie at 112 to 132 (LSLI…ALAA), 137 to 157 (SLAY…GGLC), 172 to 194 (LWLS…WMYW), and 205 to 225 (LVLW…ICYW).

It belongs to the paxB family.

It is found in the membrane. It functions in the pathway secondary metabolite biosynthesis. Its function is as follows. Terpene cyclase; part of the gene cluster that mediates the biosynthesis of the indole diterpenes penitrems. The geranylgeranyl diphosphate (GGPP) synthase ptmG catalyzes the first step in penitrem biosynthesis via conversion of farnesyl pyrophosphate and isopentyl pyrophosphate into geranylgeranyl pyrophosphate (GGPP). Condensation of indole-3-glycerol phosphate with GGPP by the prenyl transferase ptmC then forms 3-geranylgeranylindole (3-GGI). Epoxidation by the FAD-dependent monooxygenase ptmM leads to a epoxidized-GGI that is substrate of the terpene cyclase ptmB for cyclization to yield paspaline. Paspaline is subsequently converted to 13-desoxypaxilline by the cytochrome P450 monooxygenase ptmP, the latter being then converted to paxilline by the cytochrome P450 monooxygenase ptmQ. Paxilline is converted to beta-paxitriol via C-10 ketoreduction by the short-chain dehydrogenase ptmH which can be monoprenylated at the C-20 by the indole diterpene prenyltransferase ptmD. A two-step elimination (acetylation and elimination) process performed by the O-acetyltransferase ptmV and ptmI leads to the production of the prenylated form of penijanthine. The FAD-linked oxidoreductase ptmO then converts the prenylated form of penijanthine into PC-M5 which is in turn transformed into PC-M4 by the aromatic dimethylallyltransferase ptmE. Five sequential oxidative transformations performed by the cytochrome P450 monooxygenases ptmK, ptmU, ptmL, ptmN and ptmJ yield the various penitrem compounds. PtmK, ptmU and ptmM are involved in the formation of the key bicyclic ring of penitrem C via the formation of the intermediates secopenitrem D and penitrem D. PtmL catalyzes the epoxidation of penitrem D and C to yield penitrem B and F, respectively. PtmJ catalyzes the last benzylic hydroxylation to convert penitrem B to prenitrem E and penitrem F to penitrem A. The protein is Terpene cyclase ptmB of Penicillium ochrochloron.